The chain runs to 311 residues: MSTFSLKIIRVGITVLVVVLAVIAIFNVWAFYTESPWTRDAKFTADVVAIAPDVSGLLTEVPVKDNQLVQKGQILFVIDQPRYQQALAEAEADVAYYQTLAAEKQRESSRRHRLGIQALSQEEIDQASNVLQTVQHQLAKAIAVRDLARLDLERTTVRAPAEGWVTNLNVHAGEFINRGATAVALVKKDTFYILAYLEETKLEGVKPGYRAEITPLGSNRILHGTVDSISAGVTNSSSSADSKGLATIDNNLEWVRLAQRVPVKIHLDSEDQQYLYPAGTTATVVITGPNDRDPHQASPMTKLMHRLREFG.

The chain crosses the membrane as a helical span at residues 11-31 (VGITVLVVVLAVIAIFNVWAF).

This sequence belongs to the membrane fusion protein (MFP) (TC 8.A.1) family.

It localises to the cell inner membrane. Functionally, forms an efflux pump with AaeB. The protein is p-hydroxybenzoic acid efflux pump subunit AaeA of Yersinia pestis bv. Antiqua (strain Antiqua).